The chain runs to 460 residues: MATGNVIQVIGAVVDVEFPQDAVPKVYNALEVENGAAKLVLEVEQQLGGGVVRCIAMGSSDGLRRGLKVTDLERAIEVPVGKATLGRIMNVLGEPVDMKGDIGEEERWSIHRPAPSYEELASSQDLLETGIKVIDLMCPFAKGGKVGLFGGAGVGKTVNMMELIRNIAIEHSGYSVFAGVGERTREGNDFYHEMTDSNVIDKVSLVYGQMNEPPGNRLRVALTGLTMAEKFRDEGRDVLLFIDNIYRYTLAGTEVSALLGRMPSAVGYQPTLAEEMGVLQERITSTKTGSITSVQAVYVPADDLTDPSPATTFAHLDATVVLSRQIASLGIYPAVDPLDSTSRQLDPLVVGQEHYDVARGVQSILQRYQELKDIIAILGMDELSEDDKLVVSRARKIQRFLSQPFFVAEVFTGSPGKYVALKDTIRGFKGIMDGEYDHLPEQAFYMVGSIDEAVEKGKKL.

Gly-150–Thr-157 provides a ligand contact to ATP.

This sequence belongs to the ATPase alpha/beta chains family. In terms of assembly, F-type ATPases have 2 components, CF(1) - the catalytic core - and CF(0) - the membrane proton channel. CF(1) has five subunits: alpha(3), beta(3), gamma(1), delta(1), epsilon(1). CF(0) has three main subunits: a(1), b(2) and c(9-12). The alpha and beta chains form an alternating ring which encloses part of the gamma chain. CF(1) is attached to CF(0) by a central stalk formed by the gamma and epsilon chains, while a peripheral stalk is formed by the delta and b chains.

The protein resides in the cell inner membrane. The catalysed reaction is ATP + H2O + 4 H(+)(in) = ADP + phosphate + 5 H(+)(out). Its function is as follows. Produces ATP from ADP in the presence of a proton gradient across the membrane. The catalytic sites are hosted primarily by the beta subunits. The sequence is that of ATP synthase subunit beta from Sodalis glossinidius (strain morsitans).